A 1221-amino-acid polypeptide reads, in one-letter code: A disintegrin and metalloproteinase with thrombospondin motifs 18 (1221 aa).

The signal sequence occupies residues 1–47; that stretch reads MECALLLACAFPAAGSGPPRGLAGLGRVAKALQLCCLCCASVAAALA. Positions 48 to 284 are excised as a propeptide; it reads SDSSSGASGL…EYGSSGRPRR (237 aa). 2 N-linked (GlcNAc...) asparagine glycosylation sites follow: Asn-151 and Asn-190. The Cysteine switch motif lies at 252–259; sequence HFCGRRKK. Cys-254 is a Zn(2+) binding site. A disordered region spans residues 258–291; the sequence is KKYAPKPPTEDTYLRFDEYGSSGRPRRSAGKSQK. A compositionally biased stretch (basic and acidic residues) spans 265–275; sequence PTEDTYLRFDE. Positions 293–498 constitute a Peptidase M12B domain; it reads LNVETLVVAD…PQAGCLVDEP (206 aa). Asn-313 carries N-linked (GlcNAc...) asparagine glycosylation. 11 cysteine pairs are disulfide-bonded: Cys-369-Cys-420, Cys-395-Cys-402, Cys-414-Cys-493, Cys-453-Cys-477, Cys-521-Cys-546, Cys-532-Cys-553, Cys-541-Cys-572, Cys-566-Cys-577, Cys-601-Cys-638, Cys-605-Cys-643, and Cys-616-Cys-628. His-436 is a binding site for Zn(2+). The active site involves Glu-437. Positions 440 and 446 each coordinate Zn(2+). The 80-residue stretch at 498-577 folds into the Disintegrin domain; it reads PKQAGQYKYP…LSMWCRQGQC (80 aa). Positions 589–644 constitute a TSP type-1 1 domain; that stretch reads HGQWSAWSKWSECSRTCGGGVKFQERHCNNPKPQYGGLFCPGSSRIYQLCNINPCN. Residues Asn-745, Asn-838, and Asn-909 are each glycosylated (N-linked (GlcNAc...) asparagine). The interval 750 to 876 is spacer; that stretch reads FYKGLYLNQH…TPPATKRPAY (127 aa). 4 consecutive TSP type-1 domains span residues 931-990, 991-1049, 1052-1116, and 1123-1178; these read CPAY…NSHA, CPPQ…GRCP, SRLQ…RACP, and MVAG…NFCP. The PLAC domain maps to 1184-1221; the sequence is EDPSCVDFFNWCHLVPQHGVCNHKFYGKQCCKSCTRKI.

Requires Zn(2+) as cofactor. Post-translationally, the precursor is cleaved by a furin endopeptidase. In terms of processing, glycosylated. Can be O-fucosylated by POFUT2 on a serine or a threonine residue found within the consensus sequence C1-X(2)-(S/T)-C2-G of the TSP type-1 repeat domains where C1 and C2 are the first and second cysteine residue of the repeat, respectively. Fucosylated repeats can then be further glycosylated by the addition of a beta-1,3-glucose residue by the glucosyltransferase, B3GALTL. Fucosylation mediates the efficient secretion of ADAMTS family members. Can also be C-glycosylated with one or two mannose molecules on tryptophan residues within the consensus sequence W-X-X-W of the TPRs, and N-glycosylated. These other glycosylations can also facilitate secretion. As to expression, expressed in fetal lung, liver, and kidney and in adult brain, prostate, submaxillary gland, and endothelium.

The protein resides in the secreted. It localises to the extracellular space. The protein localises to the extracellular matrix. This is A disintegrin and metalloproteinase with thrombospondin motifs 18 (ADAMTS18) from Homo sapiens (Human).